A 126-amino-acid polypeptide reads, in one-letter code: MRILFLIAFMYGCVHPYVNADEIKCPNLNIVTSSGEFRCTGCVKFMPNFSYMYWLAKDMRSDEDAKFIEHLGEGIKEDETVSTIDGRIVTLQKVLHVTDTNKFDNYRFTCVLTTIDGVSKKNIWLK.

The first 20 residues, 1-20, serve as a signal peptide directing secretion; sequence MRILFLIAFMYGCVHPYVNA.

It belongs to the orthopoxvirus OPG022 family.

The protein localises to the secreted. In terms of biological role, soluble IL18-binding protein that may modulate the host antiviral response. The sequence is that of Interleukin-18-binding protein (OPG022) from Bos taurus (Bovine).